We begin with the raw amino-acid sequence, 292 residues long: MNNSQINLPLLKKGKVRDVYDAGKMLLIVASDRVSVFDCVLPSQIPDKGKILTQISNFWFAKTISIVPNHMISSDINEINIILKLGLDPQYYSGRTVLVKKCERIDFECVVRGYITGSAWKEYQKSGTVCGEKIKEGLKEAQKFPEPIFTPASKADTGHDENVSFAYMLSHMDKNLAYKIKDTSIKLYNFAEEYLKNCGIILADTKFEFGLIDGDLILIDEILTPDSSRFWDAALYKTGTNPPGFDKQFVRDYMEQTGWDKNPPPPAMPQSIALAAAKKYKEALSRIEKGSV.

The protein belongs to the SAICAR synthetase family.

It catalyses the reaction 5-amino-1-(5-phospho-D-ribosyl)imidazole-4-carboxylate + L-aspartate + ATP = (2S)-2-[5-amino-1-(5-phospho-beta-D-ribosyl)imidazole-4-carboxamido]succinate + ADP + phosphate + 2 H(+). The protein operates within purine metabolism; IMP biosynthesis via de novo pathway; 5-amino-1-(5-phospho-D-ribosyl)imidazole-4-carboxamide from 5-amino-1-(5-phospho-D-ribosyl)imidazole-4-carboxylate: step 1/2. The sequence is that of Phosphoribosylaminoimidazole-succinocarboxamide synthase from Elusimicrobium minutum (strain Pei191).